Reading from the N-terminus, the 244-residue chain is NH(3)-dependent NAD(+) synthetase (244 aa).

29–36 provides a ligand contact to ATP; the sequence is GISGGIDS. D35 is a Mg(2+) binding site. R113 contacts deamido-NAD(+). ATP is bound at residue T133. E138 contributes to the Mg(2+) binding site. Deamido-NAD(+) is bound by residues K146 and D153. ATP-binding residues include K162 and T184. 230-231 serves as a coordination point for deamido-NAD(+); that stretch reads HK.

It belongs to the NAD synthetase family. As to quaternary structure, homodimer.

The catalysed reaction is deamido-NAD(+) + NH4(+) + ATP = AMP + diphosphate + NAD(+) + H(+). It functions in the pathway cofactor biosynthesis; NAD(+) biosynthesis; NAD(+) from deamido-NAD(+) (ammonia route): step 1/1. Its function is as follows. Catalyzes the ATP-dependent amidation of deamido-NAD to form NAD. Uses ammonia as a nitrogen source. This Mesoplasma florum (strain ATCC 33453 / NBRC 100688 / NCTC 11704 / L1) (Acholeplasma florum) protein is NH(3)-dependent NAD(+) synthetase.